Consider the following 294-residue polypeptide: 4-hydroxy-tetrahydrodipicolinate synthase (294 aa).

T45 provides a ligand contact to pyruvate. Y133 (proton donor/acceptor) is an active-site residue. K161 functions as the Schiff-base intermediate with substrate in the catalytic mechanism. I203 serves as a coordination point for pyruvate.

It belongs to the DapA family. As to quaternary structure, homotetramer; dimer of dimers.

Its subcellular location is the cytoplasm. The enzyme catalyses L-aspartate 4-semialdehyde + pyruvate = (2S,4S)-4-hydroxy-2,3,4,5-tetrahydrodipicolinate + H2O + H(+). The protein operates within amino-acid biosynthesis; L-lysine biosynthesis via DAP pathway; (S)-tetrahydrodipicolinate from L-aspartate: step 3/4. Functionally, catalyzes the condensation of (S)-aspartate-beta-semialdehyde [(S)-ASA] and pyruvate to 4-hydroxy-tetrahydrodipicolinate (HTPA). This chain is 4-hydroxy-tetrahydrodipicolinate synthase, found in Shewanella sp. (strain MR-4).